The chain runs to 542 residues: Glutamyl-tRNA(Gln) amidotransferase subunit B, mitochondrial (542 aa).

This sequence belongs to the GatB/GatE family. GatB subfamily. In terms of assembly, subunit of the heterotrimeric GatFAB amidotransferase (AdT) complex, composed of A, B and F subunits.

Its subcellular location is the mitochondrion. It carries out the reaction L-glutamyl-tRNA(Gln) + L-glutamine + ATP + H2O = L-glutaminyl-tRNA(Gln) + L-glutamate + ADP + phosphate + H(+). Allows the formation of correctly charged Gln-tRNA(Gln) through the transamidation of misacylated Glu-tRNA(Gln) in the mitochondria. The reaction takes place in the presence of glutamine and ATP through an activated gamma-phospho-Glu-tRNA(Gln). The sequence is that of Glutamyl-tRNA(Gln) amidotransferase subunit B, mitochondrial from Candida glabrata (strain ATCC 2001 / BCRC 20586 / JCM 3761 / NBRC 0622 / NRRL Y-65 / CBS 138) (Yeast).